We begin with the raw amino-acid sequence, 95 residues long: Large ribosomal subunit protein bL25 (95 aa).

Belongs to the bacterial ribosomal protein bL25 family. In terms of assembly, part of the 50S ribosomal subunit; part of the 5S rRNA/L5/L18/L25 subcomplex. Contacts the 5S rRNA. Binds to the 5S rRNA independently of L5 and L18.

Functionally, this is one of the proteins that binds to the 5S RNA in the ribosome where it forms part of the central protuberance. This chain is Large ribosomal subunit protein bL25, found in Shewanella sediminis (strain HAW-EB3).